The sequence spans 243 residues: Carboxy-S-adenosyl-L-methionine synthase (243 aa).

S-adenosyl-L-methionine is bound by residues Y40, 65 to 67 (GCS), 90 to 91 (DN), 118 to 119 (DI), N133, and R200.

The protein belongs to the class I-like SAM-binding methyltransferase superfamily. Cx-SAM synthase family. In terms of assembly, homodimer.

It carries out the reaction prephenate + S-adenosyl-L-methionine = carboxy-S-adenosyl-L-methionine + 3-phenylpyruvate + H2O. In terms of biological role, catalyzes the conversion of S-adenosyl-L-methionine (SAM) to carboxy-S-adenosyl-L-methionine (Cx-SAM). This chain is Carboxy-S-adenosyl-L-methionine synthase, found in Shewanella sp. (strain MR-7).